The chain runs to 546 residues: MAKDIKFSEDARRSMLNGVSKLADTVKVTLGPRGRNVVLEKSYGSPLITNDGVTIAKEIELENRFENMGAQLVSEVASKTNDIAGDGTTTATVLAQSIVSEGLKNVTSGANPLGIRRGIEQATQKAVEELQNISTPVESKEAIVQVGEVSSGSKQVGQYIADAMDKVGNDGVITIEDSQGIDTELDVVEGMQFDRGYLSQYMVTDNEKMEADLDSPYILITDKKISNIQDILPLLEQVVQESKPLLIIADDIDGEALPTLVLNKIRGTFNVVATKAPGFGDRRKAMLEDIAVLTGATVITEDLGLELKDATMDSLGKANKVTVDKDNTTIVEGAGDSTAIEDRVQLIKNQVAETTSDFDREKLQERLAKLAGGVAVIKVGAATETEQKELKLRIEDALNAARAGVEEGMVSGGGTALVNVINKVAELDADDDAITGVNIVLRALEEPVRQISENAGFEGSVIIEKLKSEKLGIGFNAATGQWVNMVDAGIVDPTKVVRSALQNAASISALLLSTEAVIADRPDESGNDAGAGAQGMDPSMMGGGMM.

ATP contacts are provided by residues 29–32, 86–90, glycine 413, 476–478, and aspartate 492; these read TLGP, DGTTT, and NAA. A disordered region spans residues 521-546; sequence RPDESGNDAGAGAQGMDPSMMGGGMM.

Belongs to the chaperonin (HSP60) family. Forms a cylinder of 14 subunits composed of two heptameric rings stacked back-to-back. Interacts with the co-chaperonin GroES.

Its subcellular location is the cytoplasm. It catalyses the reaction ATP + H2O + a folded polypeptide = ADP + phosphate + an unfolded polypeptide.. In terms of biological role, together with its co-chaperonin GroES, plays an essential role in assisting protein folding. The GroEL-GroES system forms a nano-cage that allows encapsulation of the non-native substrate proteins and provides a physical environment optimized to promote and accelerate protein folding. This is Chaperonin GroEL from Tetragenococcus halophilus (Pediococcus halophilus).